A 38-amino-acid chain; its full sequence is Phi-Lf prophage-derived putative minor coat protein (38 aa).

In Xanthomonas campestris pv. campestris (strain ATCC 33913 / DSM 3586 / NCPPB 528 / LMG 568 / P 25), this protein is Phi-Lf prophage-derived putative minor coat protein (gIX-1).